The chain runs to 546 residues: Chaperonin GroEL (546 aa).

ATP is bound by residues 29-32, lysine 50, 86-90, glycine 412, 476-478, and aspartate 492; these read TMGP, DGTTT, and NAA.

The protein belongs to the chaperonin (HSP60) family. Forms a cylinder of 14 subunits composed of two heptameric rings stacked back-to-back. Interacts with the co-chaperonin GroES.

It localises to the cytoplasm. The catalysed reaction is ATP + H2O + a folded polypeptide = ADP + phosphate + an unfolded polypeptide.. In terms of biological role, together with its co-chaperonin GroES, plays an essential role in assisting protein folding. The GroEL-GroES system forms a nano-cage that allows encapsulation of the non-native substrate proteins and provides a physical environment optimized to promote and accelerate protein folding. Its function is as follows. May play a protective role against the defense mechanisms generated by the infected macrophages. In Legionella micdadei (Tatlockia micdadei), this protein is Chaperonin GroEL.